A 75-amino-acid polypeptide reads, in one-letter code: Large ribosomal subunit protein bL31 (75 aa).

The protein belongs to the bacterial ribosomal protein bL31 family. Type A subfamily. Part of the 50S ribosomal subunit.

Functionally, binds the 23S rRNA. The polypeptide is Large ribosomal subunit protein bL31 (Chlorobium limicola (strain DSM 245 / NBRC 103803 / 6330)).